Here is a 445-residue protein sequence, read N- to C-terminus: Canavalin (445 aa).

An N-terminal signal peptide occupies residues 1-26 (MAFSARFPLWLLLGVVLLASVSASFA). Cupin type-1 domains are found at residues 49–207 (YLFR…DEIE) and 249–407 (FNLR…EEVE).

It belongs to the 7S seed storage protein family. As to quaternary structure, homotrimer.

Functionally, seed storage protein. The protein is Canavalin of Canavalia gladiata (Sword bean).